Reading from the N-terminus, the 790-residue chain is Pentatricopeptide repeat-containing protein OTP51, chloroplastic (790 aa).

A chloroplast-targeting transit peptide spans 1 to 56; sequence MATTSPCAAPSPSLRCPLALSHPFASPPPPPALRLAGPKLLPGRLAVSPPPGIPAV. PPR repeat units follow at residues 182 to 216, 217 to 254, 256 to 296, 299 to 333, 334 to 368, 369 to 403, 404 to 438, 439 to 469, 473 to 507, and 509 to 543; these read NFALATRVADCLGRDGKVEKCREVFEAMVKQGRVP, AESTFHILIVAYLSVPKGRCLEEACTIYNQMIQMGGYK, RLSL…NLDV, DVYAGLIWLHSYQDVIDRERIIALRKEMKQAGFDE, GIDVLVSVMRAFSKEGNVAETEATWHNILQSGSDL, PVQAYVCRMEAYARTGEPMKSLDMFKEMKDKNIPP, NVASYHKIIEIMTKALEVDIVEQLMNEFIESDMKH, LMPAFLDLMYMYMDLDMHEKLELTFLKCIAR, NRILYTIYLESLVKVGNIEKAEEVFGEMHNNGMIG, and NTKSCNIMLRGYLSAEDYQKAEKVYDMMSKKKYDV. The segment at 762 to 790 is disordered; the sequence is GSSIGSDGTQDTDTDSDDDMQMSDTERDE. Acidic residues predominate over residues 771–790; the sequence is QDTDTDSDDDMQMSDTERDE.

It belongs to the PPR family. P subfamily.

The protein localises to the plastid. Its subcellular location is the chloroplast. Functionally, promotes the splicing of group II introns in chloroplasts. Required for the splicing of intron 2 of plastid ycf3 transcripts, a factor required for the assembly of photosystem I (PSI). Involved in the splicing of atpF, ndhA, petB and rps16 chloroplastic transcripts. Required for the assembly of PSI. In Oryza sativa subsp. japonica (Rice), this protein is Pentatricopeptide repeat-containing protein OTP51, chloroplastic.